A 703-amino-acid polypeptide reads, in one-letter code: Ion-translocating oxidoreductase complex subunit C (703 aa).

4Fe-4S ferredoxin-type domains lie at 368-397 (MAPQ…QQLY) and 407-436 (KARN…VQYY). 8 residues coordinate [4Fe-4S] cluster: Cys377, Cys380, Cys383, Cys387, Cys416, Cys419, Cys422, and Cys426. Disordered stretches follow at residues 505–558 (AVPA…EDPR) and 653–674 (AQQA…EEDP). Over residues 524–539 (AAREARKAQARERRAQ) the composition is skewed to basic and acidic residues.

It belongs to the 4Fe4S bacterial-type ferredoxin family. RnfC subfamily. The complex is composed of six subunits: RnfA, RnfB, RnfC, RnfD, RnfE and RnfG. The cofactor is [4Fe-4S] cluster.

The protein resides in the cell inner membrane. Part of a membrane-bound complex that couples electron transfer with translocation of ions across the membrane. The protein is Ion-translocating oxidoreductase complex subunit C of Serratia proteamaculans (strain 568).